We begin with the raw amino-acid sequence, 216 residues long: DNA-binding protein HupB (216 aa).

A propeptide (removed; alternate) is located at residue G2. M3 is modified (N-acetylmethionine). The segment at 3-92 (MNKAELIDVL…PGAQFKAVVS (90 aa)) is bacterial histone-like domain. N6-acetyllysine is present on residues K5, K74, K88, K105, K118, and K135. Residues 102–216 (PAVKRGVGAS…KKATARRGRK (115 aa)) are disordered. The interval 103 to 216 (AVKRGVGASA…KKATARRGRK (114 aa)) is degenerate repeats region. The span at 104 to 114 (VKRGVGASAAK) shows a compositional bias: low complexity. The segment covering 115 to 216 (KVAKKAPAKK…KKATARRGRK (102 aa)) has biased composition (basic residues). An N6,N6,N6-trimethyllysine modification is found at K140. An N6-acetyllysine mark is found at K148 and K169.

This sequence belongs to the bacterial histone-like protein family. Long actinobacterial subfamily. Oligomerizes. Interacts with topoisomerase 1 (topA). Interacts with Eis. Interacts with antigen 85 proteins (fbpA, fbpB, fbpC). Post-translationally, probably acetylated by Eis in vivo. In vitro acetylated by Eis (strain H37Rv and H37Ra) on many more residues than those identified in vivo. Deacetylated in vitro by NAD-dependent protein deacylase (Rv1151c). Trimethylated on Lys-140 by human SUV39H1; trimethylation inhibits mycobacterial growth. SUV39H1 probably also trimethylates another residue. In terms of processing, probably succinylated by Rv0802c and desuccinylated by NAD-dependent protein deacylase (Rv1151c).

The protein resides in the cytoplasm. It localises to the nucleoid. Its subcellular location is the secreted. The protein localises to the cell wall. It carries out the reaction 4 Fe(2+) + O2 + 4 H(+) = 4 Fe(3+) + 2 H2O. In terms of biological role, a nucleoid-associated protein (NAP) that probably plays a role in chromosome compactation. Binds DNA non-specifically, with greater affinity for supercoiled than linear DNA, binds well to nicked DNA, gapped and cruciform DNA. Has a preference for A:T rich DNA. Required for activation of the mtbB operon. Binds the mtbB promoter in the presence of iron, binding is seen with as little as 25 uM Fe(2+) and increases with increasing Fe(2+). RNase E and HupB jointly contribute to cellular adaptation to changing growth conditions and survival during antibiotic treatment and in the host. Plays a role in stress survival. Stimulates supercoiling relaxation by topoisomerase 1 (Top1, topA). Binds Fe(3+) but not Fe(2+). Has ferroxidase activity, converts Fe(2+) into Fe(3+) and in the presence of H(2)O(2) prevents the generation of hydroxyl radicals (the Fenton reaction). Protects DNA from damage in the presence of FeSO(4) and H(2)O(2). May function in iron storage. Involved in iron uptake by bacteria (either Fe(3+) or extracellular carboxymycobactin); antibodies against HupB block uptake of both. Following uptake iron is mostly found in the iron siderophores carboxymycobactin (CMb, extracellular) or mycobactin (Mb, lipophilic). Facilitates transfer of iron from CMb to Mb when liposomes plus a cell wall lysate are incubated with CMb. Binds iron, ferri-CMb and ferri-Mb; has 10-fold higher affinity for ferri-Mb. Suggested to transfer iron from CBm to Mb at the cell membrane. Its function is as follows. Required for biofilm formation; trimethylation by recombinant human SUV39H1 (a histone methyltransferase) inhibits biofilm formation. Induces lymphoproliferation, particularly in health tuberculin reactors, and is immunogenic. Maybe involved in pathogenesis of inflammatory bowel disease (IBD) in patients with ulcerative colitis and Crohn disease (CD). Bound by anti-neutrophil cytoplasmic antibodies (pANCA), which are a hallmark of IBD. The binding is due to pANCA directed against H1-3 cross-reacting with DBH epitopes. In CD, target of a strong IgA response. Functionally, may play a role in cell wall assembly. In vitro at low levels enhances formation of TMM and TDM by antigen 85 proteins (fbpA, fbpB, fbpC), at higher levels inhibits TMM and TDM formation. The protein is DNA-binding protein HupB of Mycobacterium tuberculosis (strain ATCC 25618 / H37Rv).